The sequence spans 299 residues: Protease HtpX homolog (299 aa).

The next 2 helical transmembrane spans lie at 5 to 25 and 44 to 64; these read IFLFILTNILVITTIGIVLSV and MVALLVFSAVVGFVGSFMSLA. H155 is a Zn(2+) binding site. The active site involves E156. Position 159 (H159) interacts with Zn(2+). Helical transmembrane passes span 170-190 and 205-225; these read LLQGIVNTFVVFLSRIAAWIA and FIAVIVFQIIFSVLGSLVVFA. E231 is a Zn(2+) binding site.

Belongs to the peptidase M48B family. It depends on Zn(2+) as a cofactor.

The protein resides in the cell membrane. In Bacillus pumilus (strain SAFR-032), this protein is Protease HtpX homolog.